Reading from the N-terminus, the 211-residue chain is Thiamine-phosphate synthase (211 aa).

4-amino-2-methyl-5-(diphosphooxymethyl)pyrimidine-binding positions include 37-41 (QLRIK) and N69. Positions 70 and 89 each coordinate Mg(2+). S108 is a 4-amino-2-methyl-5-(diphosphooxymethyl)pyrimidine binding site. 134–136 (TQT) contacts 2-[(2R,5Z)-2-carboxy-4-methylthiazol-5(2H)-ylidene]ethyl phosphate. Position 137 (K137) interacts with 4-amino-2-methyl-5-(diphosphooxymethyl)pyrimidine. 2-[(2R,5Z)-2-carboxy-4-methylthiazol-5(2H)-ylidene]ethyl phosphate is bound by residues G166 and 186-187 (VS).

It belongs to the thiamine-phosphate synthase family. Mg(2+) is required as a cofactor.

It catalyses the reaction 2-[(2R,5Z)-2-carboxy-4-methylthiazol-5(2H)-ylidene]ethyl phosphate + 4-amino-2-methyl-5-(diphosphooxymethyl)pyrimidine + 2 H(+) = thiamine phosphate + CO2 + diphosphate. It carries out the reaction 2-(2-carboxy-4-methylthiazol-5-yl)ethyl phosphate + 4-amino-2-methyl-5-(diphosphooxymethyl)pyrimidine + 2 H(+) = thiamine phosphate + CO2 + diphosphate. The catalysed reaction is 4-methyl-5-(2-phosphooxyethyl)-thiazole + 4-amino-2-methyl-5-(diphosphooxymethyl)pyrimidine + H(+) = thiamine phosphate + diphosphate. The protein operates within cofactor biosynthesis; thiamine diphosphate biosynthesis; thiamine phosphate from 4-amino-2-methyl-5-diphosphomethylpyrimidine and 4-methyl-5-(2-phosphoethyl)-thiazole: step 1/1. Its function is as follows. Condenses 4-methyl-5-(beta-hydroxyethyl)thiazole monophosphate (THZ-P) and 2-methyl-4-amino-5-hydroxymethyl pyrimidine pyrophosphate (HMP-PP) to form thiamine monophosphate (TMP). This is Thiamine-phosphate synthase from Salmonella agona (strain SL483).